We begin with the raw amino-acid sequence, 258 residues long: Protein STAY-GREEN LIKE, chloroplastic (258 aa).

It belongs to the staygreen family. Strongly expressed in leaves, stems and panicles, and at lower levels in roots and seeds.

Functionally, promotes chlorophyll degradation in leaves. May be involved in LHCI proteins degradation, regulating the balance between LHCI and LHCII. This is Protein STAY-GREEN LIKE, chloroplastic from Oryza sativa subsp. japonica (Rice).